The sequence spans 432 residues: Adenylosuccinate synthetase (432 aa).

GTP-binding positions include 13-19 (GDEGKGK) and 41-43 (GHT). The Proton acceptor role is filled by Asp14. Asp14 and Gly41 together coordinate Mg(2+). Residues 14-17 (DEGK), 39-42 (NAGH), Thr130, Arg144, Gln225, Thr240, and Arg304 each bind IMP. His42 functions as the Proton donor in the catalytic mechanism. Position 300 to 306 (300 to 306 (AVTGRPR)) interacts with substrate. Residues Arg306, 332-334 (KLD), and 415-417 (STG) each bind GTP.

It belongs to the adenylosuccinate synthetase family. Homodimer. Mg(2+) is required as a cofactor.

It localises to the cytoplasm. The catalysed reaction is IMP + L-aspartate + GTP = N(6)-(1,2-dicarboxyethyl)-AMP + GDP + phosphate + 2 H(+). It participates in purine metabolism; AMP biosynthesis via de novo pathway; AMP from IMP: step 1/2. Functionally, plays an important role in the de novo pathway of purine nucleotide biosynthesis. Catalyzes the first committed step in the biosynthesis of AMP from IMP. This chain is Adenylosuccinate synthetase, found in Haemophilus influenzae (strain PittEE).